The sequence spans 468 residues: UDP-N-acetylmuramate--L-alanine ligase (468 aa).

114–120 (GTHGKTT) provides a ligand contact to ATP.

This sequence belongs to the MurCDEF family.

The protein localises to the cytoplasm. It carries out the reaction UDP-N-acetyl-alpha-D-muramate + L-alanine + ATP = UDP-N-acetyl-alpha-D-muramoyl-L-alanine + ADP + phosphate + H(+). Its pathway is cell wall biogenesis; peptidoglycan biosynthesis. Functionally, cell wall formation. The sequence is that of UDP-N-acetylmuramate--L-alanine ligase from Methylorubrum extorquens (strain PA1) (Methylobacterium extorquens).